We begin with the raw amino-acid sequence, 106 residues long: Probable glutaredoxin (106 aa).

Residues Ile8–Gln106 form the Glutaredoxin domain. A disulfide bridge connects residues Cys28 and Cys31.

The protein belongs to the glutaredoxin family.

It is found in the virion. The chain is Probable glutaredoxin from Acanthamoeba polyphaga mimivirus (APMV).